A 246-amino-acid chain; its full sequence is Large ribosomal subunit protein uL4 (246 aa).

The interval 37–103 is disordered; it reads AAQANRKQDY…TEKDRSLDLN (67 aa). The span at 92-103 shows a compositional bias: basic and acidic residues; that stretch reads PKTEKDRSLDLN.

It belongs to the universal ribosomal protein uL4 family. Part of the 50S ribosomal subunit. Interacts weakly with proteins L18e, L24 and L37e. Has been cross-linked to L18e.

Its function is as follows. One of the primary rRNA binding proteins, this protein initially binds near the 5'-end of the 23S rRNA. It is important during the early stages of 50S assembly. Makes multiple contacts with different domains of the 23S rRNA in the assembled 50S subunit. Functionally, forms part of the polypeptide exit tunnel, in which it helps forms a bend with protein L22. Contacts the macrolide antibiotic spiramycin in the polypeptide exit tunnel. In Haloarcula marismortui (strain ATCC 43049 / DSM 3752 / JCM 8966 / VKM B-1809) (Halobacterium marismortui), this protein is Large ribosomal subunit protein uL4 (rpl4).